A 293-amino-acid chain; its full sequence is Carbapenem-hydrolyzing beta-lactamase KPC (293 aa).

An N-terminal signal peptide occupies residues 1 to 24 (MSLYRRLVLLSCLSWPLAGFSATA). Catalysis depends on serine 69, which acts as the Acyl-ester intermediate. The active-site Proton acceptor is the glutamate 167. 233–235 (KTG) provides a ligand contact to substrate.

This sequence belongs to the class-A beta-lactamase family.

It carries out the reaction a beta-lactam + H2O = a substituted beta-amino acid. With respect to regulation, not inhibited by EDTA, inhibited by clavulanic acid and tazobactam. Functionally, hydrolyzes carbapenems, penicillins, cephalosporins and aztreonam with varying efficiency. The polypeptide is Carbapenem-hydrolyzing beta-lactamase KPC (bla) (Klebsiella oxytoca).